The following is a 202-amino-acid chain: Ras-related protein Rab-1A (202 aa).

Residues 15 to 23 (GDSGVGKSC), 33 to 40 (YSESFIST), 63 to 67 (DTAGQ), 121 to 124 (NKSD), and 151 to 153 (SAK) each bind GTP. Positions 37–45 (FISTIGVDF) match the Effector region motif. Residues 180–202 (QTVDKNKVVPGSSAPISPKSGCC) form a disordered region. Residues Cys-201 and Cys-202 are each lipidated (S-geranylgeranyl cysteine).

It belongs to the small GTPase superfamily. Rab family.

It localises to the cell membrane. This Dictyostelium discoideum (Social amoeba) protein is Ras-related protein Rab-1A (rab1A).